A 201-amino-acid chain; its full sequence is Small ribosomal subunit protein uS4c (201 aa).

The disordered stretch occupies residues glycine 16–arginine 37. The 64-residue stretch at methionine 89–isoleucine 152 folds into the S4 RNA-binding domain.

This sequence belongs to the universal ribosomal protein uS4 family. Part of the 30S ribosomal subunit. Contacts protein S5. The interaction surface between S4 and S5 is involved in control of translational fidelity.

Its subcellular location is the plastid. It localises to the chloroplast. One of the primary rRNA binding proteins, it binds directly to 16S rRNA where it nucleates assembly of the body of the 30S subunit. Functionally, with S5 and S12 plays an important role in translational accuracy. The sequence is that of Small ribosomal subunit protein uS4c (rps4) from Chloranthus spicatus (Chulantree).